Reading from the N-terminus, the 211-residue chain is MPPGPDMTLELACGQAPVCGVDEAGRGPWAGPVSAGAVILDPDRIPKGLNDSKKLSAKARAALEEEIKDVAISWCVGLASIEEIAQLNILHAAGLAMRRAVEGLAVTPAFALVDGNYAFKLPCPVKTVIKGDSLSCSIAAASILAKEARDRIMIEADALYPGYGFAGHKGYHAKVHVEGLRRLGPSPIHRLGWAPVKAALAAAAVNGELDL.

The RNase H type-2 domain maps to 16 to 205 (APVCGVDEAG…VKAALAAAAV (190 aa)). A divalent metal cation-binding residues include Asp22, Glu23, and Asp114.

This sequence belongs to the RNase HII family. It depends on Mn(2+) as a cofactor. The cofactor is Mg(2+).

Its subcellular location is the cytoplasm. It catalyses the reaction Endonucleolytic cleavage to 5'-phosphomonoester.. In terms of biological role, endonuclease that specifically degrades the RNA of RNA-DNA hybrids. The polypeptide is Ribonuclease HII (rnhB) (Caulobacter vibrioides (strain ATCC 19089 / CIP 103742 / CB 15) (Caulobacter crescentus)).